The sequence spans 214 residues: Endothelin-3 (214 aa).

Positions 1–16 (MEPGLWLLLGLTVTSA) are cleaved as a signal peptide. The propeptide occupies 17–94 (AGLVPCPQSG…DKGLPAHHRP (78 aa)). The segment at 24–91 (QSGDSGRASV…KQEDKGLPAH (68 aa)) is disordered. A compositionally biased stretch (polar residues) spans 25 to 35 (SGDSGRASVSQ). 2 cysteine pairs are disulfide-bonded: Cys-97-Cys-111 and Cys-99-Cys-107. Residues 118 to 214 (INTPEQTVPY…MSRTDKAHRP (97 aa)) constitute a propeptide that is removed on maturation. The interval 159-173 (CTCMGADDKACAHFC) is endothelin-like. The disordered stretch occupies residues 183-214 (SGRAERPAAEEMRETGGPRQRLMSRTDKAHRP). Positions 185–198 (RAERPAAEEMRETG) are enriched in basic and acidic residues.

The protein belongs to the endothelin/sarafotoxin family.

It localises to the secreted. In terms of biological role, endothelins are endothelium-derived vasoconstrictor peptides. The protein is Endothelin-3 (Edn3) of Mus musculus (Mouse).